Consider the following 488-residue polypeptide: Kelch-like protein 15 (488 aa).

In terms of domain architecture, BTB spans 31 to 98 (LDVTLVIEDH…MYYGTIELSM (68 aa)). Residues 133 to 237 (CAEIMRLLDD…TPSSVFEKVK (105 aa)) enclose the BACK domain. 3 Kelch repeats span residues 328-379 (FVFL…VIGR), 381-426 (VYAV…VLGN), and 428-473 (LYIT…NKCK).

In terms of assembly, homodimer. Interacts with CUL3.

It is found in the nucleus. It functions in the pathway protein modification; protein ubiquitination. Its function is as follows. Substrate-specific adapter for CUL3 E3 ubiquitin-protein ligase complex. The polypeptide is Kelch-like protein 15 (KLHL15) (Gallus gallus (Chicken)).